The chain runs to 265 residues: Glutamate racemase (265 aa).

Substrate contacts are provided by residues 10-11 (DS) and 42-43 (YG). Cys-73 serves as the catalytic Proton donor/acceptor. Position 74–75 (74–75 (NT)) interacts with substrate. Residue Cys-184 is the Proton donor/acceptor of the active site. 185–186 (TH) provides a ligand contact to substrate.

This sequence belongs to the aspartate/glutamate racemases family.

It catalyses the reaction L-glutamate = D-glutamate. Its pathway is cell wall biogenesis; peptidoglycan biosynthesis. Functionally, provides the (R)-glutamate required for cell wall biosynthesis. In Pediococcus pentosaceus (strain ATCC 25745 / CCUG 21536 / LMG 10740 / 183-1w), this protein is Glutamate racemase.